We begin with the raw amino-acid sequence, 345 residues long: Linoleate 10R-lipoxygenase COP4 (345 aa).

Residues aspartate 87, aspartate 91, asparagine 222, serine 226, and glutamate 230 each coordinate Mg(2+). The DDXXD motif signature appears at 87 to 91 (DEISD).

Belongs to the terpene synthase family. It depends on Mg(2+) as a cofactor.

It catalyses the reaction (2E,6E)-farnesyl diphosphate + H2O = cubebol + diphosphate. The enzyme catalyses (2E,6E)-farnesyl diphosphate = beta-copaene + diphosphate. It carries out the reaction (2E,6E)-farnesyl diphosphate = beta-cubebene + diphosphate. The catalysed reaction is (2E,6E)-farnesyl diphosphate = (+)-sativene + diphosphate. Its function is as follows. Sesquiterpene synthase that catalyzes the cyclization of farnesyl diphosphate (FPP) into multiple products, including germacrene D, beta-copaene, beta-cubebene, (+)-sativene and cubebol, a natural sesquiterpene alcohol used in the food industry for its cooling and refreshing taste. Terpenoid hydrocarbons resulting from cyclization of farnesyl diphosphate are intermediates in the biosynthesis of biologically active compounds such as antibiotics, toxins and pheromones. In Coprinopsis cinerea (strain Okayama-7 / 130 / ATCC MYA-4618 / FGSC 9003) (Inky cap fungus), this protein is Linoleate 10R-lipoxygenase COP4 (COP4).